A 61-amino-acid polypeptide reads, in one-letter code: Large ribosomal subunit protein uL30 (61 aa).

Residues Met-1–Glu-20 form a disordered region.

It belongs to the universal ribosomal protein uL30 family. As to quaternary structure, part of the 50S ribosomal subunit.

The sequence is that of Large ribosomal subunit protein uL30 from Hyphomonas neptunium (strain ATCC 15444).